We begin with the raw amino-acid sequence, 449 residues long: NADH-quinone oxidoreductase subunit H (449 aa).

9 consecutive transmembrane segments (helical) span residues 26–46 (FWLI…MTLF), 96–116 (PIFI…FAVI), 136–156 (LPVS…GLIL), 177–197 (IISY…YAGT), 211–231 (WYIA…GETN), 259–279 (FFFL…TTLF), 298–318 (WVPL…FIWL), 330–350 (FMAF…LVIA), and 365–385 (WLIG…LDPG). Positions 396–449 (AERRKLAEAPSLESIPWPPPPPGGAHHRPAVPAGTSANGSSTVIPADPPPRQES) are disordered.

It belongs to the complex I subunit 1 family. As to quaternary structure, NDH-1 is composed of 14 different subunits. Subunits NuoA, H, J, K, L, M, N constitute the membrane sector of the complex.

The protein localises to the cell membrane. It carries out the reaction a quinone + NADH + 5 H(+)(in) = a quinol + NAD(+) + 4 H(+)(out). In terms of biological role, NDH-1 shuttles electrons from NADH, via FMN and iron-sulfur (Fe-S) centers, to quinones in the respiratory chain. The immediate electron acceptor for the enzyme in this species is believed to be ubiquinone. Couples the redox reaction to proton translocation (for every two electrons transferred, four hydrogen ions are translocated across the cytoplasmic membrane), and thus conserves the redox energy in a proton gradient. This subunit may bind ubiquinone. The protein is NADH-quinone oxidoreductase subunit H of Frankia alni (strain DSM 45986 / CECT 9034 / ACN14a).